Consider the following 294-residue polypeptide: Bifunctional protein FolD (294 aa).

NADP(+)-binding positions include Gly-166–Ser-168, Ser-191, and Ile-232.

The protein belongs to the tetrahydrofolate dehydrogenase/cyclohydrolase family. As to quaternary structure, homodimer.

It catalyses the reaction (6R)-5,10-methylene-5,6,7,8-tetrahydrofolate + NADP(+) = (6R)-5,10-methenyltetrahydrofolate + NADPH. It carries out the reaction (6R)-5,10-methenyltetrahydrofolate + H2O = (6R)-10-formyltetrahydrofolate + H(+). It functions in the pathway one-carbon metabolism; tetrahydrofolate interconversion. In terms of biological role, catalyzes the oxidation of 5,10-methylenetetrahydrofolate to 5,10-methenyltetrahydrofolate and then the hydrolysis of 5,10-methenyltetrahydrofolate to 10-formyltetrahydrofolate. This chain is Bifunctional protein FolD, found in Bradyrhizobium sp. (strain BTAi1 / ATCC BAA-1182).